The following is a 398-amino-acid chain: 1-deoxy-D-xylulose 5-phosphate reductoisomerase (398 aa).

The NADPH site is built by Thr10, Gly11, Ser12, Ile13, Gly36, Asn38, and Asn124. Lys125 lines the 1-deoxy-D-xylulose 5-phosphate pocket. Position 126 (Glu126) interacts with NADPH. Asp150 is a binding site for Mn(2+). 1-deoxy-D-xylulose 5-phosphate contacts are provided by Ser151, Glu152, Ser176, and His199. Residue Glu152 participates in Mn(2+) binding. An NADPH-binding site is contributed by Gly205. 4 residues coordinate 1-deoxy-D-xylulose 5-phosphate: Ser212, Asn217, Lys218, and Glu221. Residue Glu221 participates in Mn(2+) binding.

This sequence belongs to the DXR family. Mg(2+) serves as cofactor. Mn(2+) is required as a cofactor.

It carries out the reaction 2-C-methyl-D-erythritol 4-phosphate + NADP(+) = 1-deoxy-D-xylulose 5-phosphate + NADPH + H(+). It participates in isoprenoid biosynthesis; isopentenyl diphosphate biosynthesis via DXP pathway; isopentenyl diphosphate from 1-deoxy-D-xylulose 5-phosphate: step 1/6. Functionally, catalyzes the NADPH-dependent rearrangement and reduction of 1-deoxy-D-xylulose-5-phosphate (DXP) to 2-C-methyl-D-erythritol 4-phosphate (MEP). This Nostoc punctiforme (strain ATCC 29133 / PCC 73102) protein is 1-deoxy-D-xylulose 5-phosphate reductoisomerase.